The following is a 402-amino-acid chain: NAD-dependent protein deacetylase sirtuin-7 (402 aa).

The interval 1–23 is disordered; that stretch reads MAAGGGLSRSERKAAERVRRLRE. Positions 9 to 23 are enriched in basic and acidic residues; it reads RSERKAAERVRRLRE. The region spanning 83-330 is the Deacetylase sirtuin-type domain; it reads PEELRRKVRE…QLLMNELGLE (248 aa). NAD(+) contacts are provided by residues 108-127 and 168-171; these read GAGI…NGVW and QNCD. Catalysis depends on histidine 188, which acts as the Proton acceptor. Zn(2+) is bound by residues cysteine 196, cysteine 199, cysteine 226, and cysteine 229. NAD(+) is bound by residues 269 to 271, 298 to 300, and cysteine 316; these read GSS and NLQ. The segment at 355–402 is disordered; the sequence is SHSRKSLCRSREEAPPGDQSDPLASAPPILGGWFGRGCAKRAKRKKVA. At arginine 390 the chain carries Asymmetric dimethylarginine; alternate. Arginine 390 is subject to Omega-N-methylarginine; alternate. The span at 392–402 shows a compositional bias: basic residues; it reads CAKRAKRKKVA.

It belongs to the sirtuin family. Class IV subfamily. In terms of assembly, interacts with UBTF and the RNA polymerase I complex. Interacts with components of the B-WICH complex, such as MYBBP1A, SMARCA5/SNF2H and BAZ1B/WSTF. Interacts with ELK4, leading to stabilization at target promoters for H3K18Ac deacetylation. Interacts with histone H2A and/or histone H2B. Interacts with DNMT1. Interacts with SIRT1. The cofactor is Zn(2+). Phosphorylated during mitosis. In terms of processing, methylation at Arg-390 by PRMT6 inhibits the H3K18Ac histone deacetylase activity, promoting mitochondria biogenesis and maintaining mitochondria respiration. Post-translationally, ubiquitinated via 'Lys-63'-linked ubiquitin chains. Deubiquitinated by USP7, inhibiting the H3K18Ac histone deacetylase activity and regulating gluconeogenesis. Ubiquitinated by E3 ubiquitin-protein ligase complex containing FBXO7; leading to proteasomal degradation. Detected in liver, spleen and testis. Detected in embryos.

Its subcellular location is the nucleus. It is found in the nucleolus. The protein resides in the nucleoplasm. It localises to the chromosome. The protein localises to the cytoplasm. The catalysed reaction is N(6)-acetyl-L-lysyl-[protein] + NAD(+) + H2O = 2''-O-acetyl-ADP-D-ribose + nicotinamide + L-lysyl-[protein]. It carries out the reaction N(6)-glutaryl-L-lysyl-[protein] + NAD(+) + H2O = 2''-O-glutaryl-ADP-D-ribose + nicotinamide + L-lysyl-[protein]. The enzyme catalyses N(6)-succinyl-L-lysyl-[protein] + NAD(+) + H2O = 2''-O-succinyl-ADP-D-ribose + nicotinamide + L-lysyl-[protein]. It catalyses the reaction N(6)-propanoyl-L-lysyl-[protein] + NAD(+) + H2O = 3''-O-propanoyl-ADP-D-ribose + nicotinamide + L-lysyl-[protein]. The catalysed reaction is N(6)-decanoyl-L-lysyl-[protein] + NAD(+) + H2O = 2''-O-decanoyl-ADP-D-ribose + nicotinamide + L-lysyl-[protein]. Its activity is regulated as follows. NAD-dependent protein-lysine deacetylase and deacylase activities are activated by nucleic acids. Histone deacetylase activity is activated by DNA. Protein-lysine deacylase activity is activated by RNA. H3K18Ac histone deacetylase activity is inhibited by methylation at Arg-390. H3K18Ac histone deacetylase activity is inhibited by deubiquitination by USP7. In terms of biological role, NAD-dependent protein-lysine deacylase that can act both as a deacetylase or deacylase (desuccinylase, depropionylase and deglutarylase), depending on the context. Also acts as a dedecanoylase. Specifically mediates deacetylation of histone H3 at 'Lys-18' (H3K18Ac). In contrast to other histone deacetylases, displays strong preference for a specific histone mark, H3K18Ac, directly linked to control of gene expression. H3K18Ac is mainly present around the transcription start site of genes and has been linked to activation of nuclear hormone receptors; SIRT7 thereby acts as a transcription repressor. Moreover, H3K18 hypoacetylation has been reported as a marker of malignancy in various cancers and seems to maintain the transformed phenotype of cancer cells. Also able to mediate deacetylation of histone H3 at 'Lys-36' (H3K36Ac) in the context of nucleosomes. Also mediates deacetylation of non-histone proteins, such as ATM, CDK9, DDX21, DDB1, FBL, FKBP5/FKBP51, GABPB1, RAN, RRP9/U3-55K and POLR1E/PAF53. Enriched in nucleolus where it stimulates transcription activity of the RNA polymerase I complex. Acts by mediating the deacetylation of the RNA polymerase I subunit POLR1E/PAF53, thereby promoting the association of RNA polymerase I with the rDNA promoter region and coding region. In response to metabolic stress, SIRT7 is released from nucleoli leading to hyperacetylation of POLR1E/PAF53 and decreased RNA polymerase I transcription. Required to restore the transcription of ribosomal RNA (rRNA) at the exit from mitosis. Promotes pre-ribosomal RNA (pre-rRNA) cleavage at the 5'-terminal processing site by mediating deacetylation of RRP9/U3-55K, a core subunit of the U3 snoRNP complex. Mediates 'Lys-37' deacetylation of Ran, thereby regulating the nuclear export of NF-kappa-B subunit RELA/p65. Acts as a regulator of DNA damage repair by mediating deacetylation of ATM during the late stages of DNA damage response, promoting ATM dephosphorylation and deactivation. May also deacetylate p53/TP53 and promotes cell survival, however such data need additional confirmation. Suppresses the activity of the DCX (DDB1-CUL4-X-box) E3 ubiquitin-protein ligase complexes by mediating deacetylation of DDB1, which prevents the interaction between DDB1 and CUL4 (CUL4A or CUL4B). Activates RNA polymerase II transcription by mediating deacetylation of CDK9, thereby promoting 'Ser-2' phosphorylation of the C-terminal domain (CTD) of RNA polymerase II. Deacetylates FBL, promoting histone-glutamine methyltransferase activity of FBL. Acts as a regulator of mitochondrial function by catalyzing deacetylation of GABPB1. Regulates Akt/AKT1 activity by mediating deacetylation of FKBP5/FKBP51. Required to prevent R-loop-associated DNA damage and transcription-associated genomic instability by mediating deacetylation and subsequent activation of DDX21, thereby overcoming R-loop-mediated stalling of RNA polymerases. In addition to protein deacetylase activity, also acts as protein-lysine deacylase. Acts as a protein depropionylase by mediating depropionylation of Osterix (SP7), thereby regulating bone formation by osteoblasts. Acts as a histone deglutarylase by mediating deglutarylation of histone H4 on 'Lys-91' (H4K91glu); a mark that destabilizes nucleosomes by promoting dissociation of the H2A-H2B dimers from nucleosomes. Acts as a histone desuccinylase: in response to DNA damage, recruited to DNA double-strand breaks (DSBs) and catalyzes desuccinylation of histone H3 on 'Lys-122' (H3K122succ), thereby promoting chromatin condensation and DSB repair. Also promotes DSB repair by promoting H3K18Ac deacetylation, regulating non-homologous end joining (NHEJ). Along with its role in DNA repair, required for chromosome synapsis during prophase I of female meiosis by catalyzing H3K18Ac deacetylation. Involved in transcriptional repression of LINE-1 retrotransposon via H3K18Ac deacetylation, and promotes their association with the nuclear lamina. Required to stabilize ribosomal DNA (rDNA) heterochromatin and prevent cellular senescence induced by rDNA instability. Acts as a negative regulator of SIRT1 by preventing autodeacetylation of SIRT1, restricting SIRT1 deacetylase activity. The chain is NAD-dependent protein deacetylase sirtuin-7 from Mus musculus (Mouse).